The sequence spans 733 residues: Arginine decarboxylase 1A, chloroplastic (733 aa).

Residues 1–44 (MPALGCCVDAAVSPPPGYSFLWDSSLPAPEIFPSGVPPSTNTAV) constitute a chloroplast transit peptide. Lysine 157 bears the N6-(pyridoxal phosphate)lysine mark. Residues serine 309, glycine 346, and 395 to 398 (ESGR) each bind pyridoxal 5'-phosphate. 460 to 461 (YA) is a substrate binding site. Catalysis depends on cysteine 548, which acts as the Proton donor; shared with dimeric partner. Aspartate 549 is a binding site for substrate. Residue tyrosine 592 coordinates pyridoxal 5'-phosphate.

The protein belongs to the Orn/Lys/Arg decarboxylase class-II family. SpeA subfamily. As to quaternary structure, interacts, via its C-terminal internal region, with the tobacco mosaic virus (TMV) replicase helicase region. Mg(2+) serves as cofactor. The cofactor is pyridoxal 5'-phosphate.

The protein localises to the plastid. It localises to the chloroplast. It carries out the reaction L-arginine + H(+) = agmatine + CO2. The protein operates within alkaloid biosynthesis; nicotine biosynthesis. It functions in the pathway amine and polyamine biosynthesis; agmatine biosynthesis; agmatine from L-arginine: step 1/1. Involved in the biosynthesis of pyridine alkaloid natural products, leading mainly to the production of anabasine, anatabine, nicotine and nornicotine, effective deterrents against herbivores with antiparasitic and pesticide properties (neurotoxins); nornicotine serves as the precursor in the synthesis of the carcinogen compound N'-nitrosonornicotine (NNN). Required for the biosynthesis of putrescine. Catalyzes the first step of polyamine (PA) biosynthesis to produce putrescine from arginine. This is Arginine decarboxylase 1A, chloroplastic from Nicotiana tabacum (Common tobacco).